Reading from the N-terminus, the 114-residue chain is MATEVKAIAKYVRTSPQKVRRILDQIRGKSYKEAVMLLSVMPYKACSIILKIVDSAAANAQVTKGFNKNKLIISKTFVDKGPTLKRFRPRAQGRGYKILKPTCHITVQVQDQSL.

The protein belongs to the universal ribosomal protein uL22 family. In terms of assembly, part of the 50S ribosomal subunit.

Its subcellular location is the plastid. The protein localises to the cyanelle. Functionally, this protein binds specifically to 23S rRNA. Its function is as follows. The globular domain of the protein is located near the polypeptide exit tunnel on the outside of the subunit, while an extended beta-hairpin is found that lines the wall of the exit tunnel in the center of the 70S ribosome. The sequence is that of Large ribosomal subunit protein uL22c (rpl22) from Cyanophora paradoxa.